Reading from the N-terminus, the 219-residue chain is Aspartic protease inhibitor 10 (219 aa).

Positions 1 to 23 (MMKCLFLLCLCLVPIVVFSSTFT) are cleaved as a signal peptide. Residues 24-32 (SQNLIDLPS) constitute a propeptide that is removed on maturation. The Vacuolar targeting signal motif lies at 26-31 (NLIDLP). The N-linked (GlcNAc...) asparagine glycan is linked to Asn-51. Disulfide bonds link Cys-80/Cys-125 and Cys-173/Cys-184.

It belongs to the protease inhibitor I3 (leguminous Kunitz-type inhibitor) family. As to expression, in tubers and green buds of untreated plants. After abscisic acid treatment or mechanical wounding is mostly accumulated in leaves, to a lesser extent in stems, but not in roots.

Its function is as follows. Inhibitor of cathepsin D (aspartic protease) and trypsin (serine protease). Protects the plant by inhibiting proteases of invading organisms. The chain is Aspartic protease inhibitor 10 (CDI) from Solanum tuberosum (Potato).